A 253-amino-acid chain; its full sequence is UPF0280 protein Mbar_A3697 (253 aa).

Belongs to the UPF0280 family.

The sequence is that of UPF0280 protein Mbar_A3697 from Methanosarcina barkeri (strain Fusaro / DSM 804).